The chain runs to 248 residues: Gamma-glutamyl peptidase 2 (248 aa).

The 196-residue stretch at 17–212 (SEFVKEMYGG…IDRVHKIKFV (196 aa)) folds into the Glutamine amidotransferase type-1 domain. The active-site Nucleophile is cysteine 101. Catalysis depends on residues histidine 191 and glutamate 193.

It belongs to the peptidase C26 family.

The protein localises to the cytoplasm. Its subcellular location is the cytosol. It catalyses the reaction an S-[(1E)-1-(hydroxyimino)-omega-(methylsulfanyl)alkyl]-L-glutathione + H2O = an S-[(1E)-1-(hydroxyimino)-omega-(methylsulfanyl)alkyl]-L-cysteinylglycine + L-glutamate. The catalysed reaction is (E)-1-(glutathione-S-yl)-2-(1H-indol-3-yl)acetohydroximate + H2O = (E)-1-(glycyl-L-cystein-S-yl)-2-(1H-indol-3-yl)acetohydroximate + L-glutamate. It carries out the reaction 2-(glutathion-S-yl)-2-(1H-indol-3-yl)acetonitrile + H2O = 2-(glycyl-L-cystein-S-yl)-2-(1H-indol-3-yl)acetonitrile + L-glutamate. The enzyme catalyses (Z)-1-(glutathione-S-yl)-2-phenylacetohydroximate + H2O = (Z)-1-(glycyl-L-cystein-S-yl)-2-phenylacetohydroximate + L-glutamate. It functions in the pathway secondary metabolite biosynthesis. Involved in glucosinolate biosynthesis. Hydrolyzes the gamma-glutamyl peptide bond of several glutathione (GSH) conjugates to produce Cys-Gly conjugates related to glucosinolates. The gamma-Glu-Cys-Gly-GSH conjugates are the sulfur-donating molecule in glucosinolate biosynthesis. The chain is Gamma-glutamyl peptidase 2 from Arabidopsis thaliana (Mouse-ear cress).